The chain runs to 441 residues: Arginine biosynthesis bifunctional protein ArgJ, mitochondrial (441 aa).

The N-terminal 8 residues, 1–8 (MRISSTLL), are a transit peptide targeting the mitochondrion. 6 residues coordinate substrate: T177, K204, T215, E301, N436, and S441. The active-site Nucleophile is T215.

This sequence belongs to the ArgJ family. As to quaternary structure, heterodimer of an alpha and a beta chain. Post-translationally, the alpha and beta chains are autoproteolytically processed from a single precursor protein within the mitochondrion.

The protein localises to the mitochondrion matrix. The enzyme catalyses N(2)-acetyl-L-ornithine + L-glutamate = N-acetyl-L-glutamate + L-ornithine. The catalysed reaction is L-glutamate + acetyl-CoA = N-acetyl-L-glutamate + CoA + H(+). Its pathway is amino-acid biosynthesis; L-arginine biosynthesis; L-ornithine and N-acetyl-L-glutamate from L-glutamate and N(2)-acetyl-L-ornithine (cyclic): step 1/1. It functions in the pathway amino-acid biosynthesis; L-arginine biosynthesis; N(2)-acetyl-L-ornithine from L-glutamate: step 1/4. Its activity is regulated as follows. Inhibited by ornithine. Catalyzes two activities which are involved in the cyclic version of arginine biosynthesis: the synthesis of acetylglutamate from glutamate and acetyl-CoA, and of ornithine by transacetylation between acetylornithine and glutamate. The polypeptide is Arginine biosynthesis bifunctional protein ArgJ, mitochondrial (Saccharomyces cerevisiae (strain ATCC 204508 / S288c) (Baker's yeast)).